The chain runs to 389 residues: Chalcone synthase (389 aa).

Cysteine 164 is an active-site residue.

It belongs to the thiolase-like superfamily. Chalcone/stilbene synthases family.

It catalyses the reaction (E)-4-coumaroyl-CoA + 3 malonyl-CoA + 3 H(+) = 2',4,4',6'-tetrahydroxychalcone + 3 CO2 + 4 CoA. Its pathway is secondary metabolite biosynthesis; flavonoid biosynthesis. In terms of biological role, the primary product of this enzyme is 4,2',4',6'-tetrahydroxychalcone (also termed naringenin-chalcone or chalcone) which can under specific conditions spontaneously isomerize into naringenin. In Hydrangea macrophylla (Bigleaf hydrangea), this protein is Chalcone synthase (CHS).